The chain runs to 72 residues: Mitotic-spindle organizing protein 1 (72 aa).

It belongs to the MOZART1 family. Part of the gamma-tubulin complex.

It is found in the cytoplasm. The protein localises to the cytoskeleton. The protein resides in the microtubule organizing center. It localises to the spindle pole body. Its function is as follows. Required for gamma-tubulin complex recruitment to the microtubule organizing center (MTOC). In Cryptococcus neoformans var. neoformans serotype D (strain B-3501A) (Filobasidiella neoformans), this protein is Mitotic-spindle organizing protein 1.